The following is a 540-amino-acid chain: Protein SOSEKI 3 (540 aa).

The interval 32 to 123 (KKVQIVYYLS…YVLKGSELFD (92 aa)) is DIX-like oligomerization domain. Disordered regions lie at residues 147–201 (EPPS…DAKN) and 219–294 (ADAS…SSLG). 2 stretches are compositionally biased toward low complexity: residues 150–163 (SSRS…SSSM) and 185–194 (RSVSSSGVSP). Residues 221-244 (ASTQTDETVSGRSKTPIETFSRGV) show a composition bias toward polar residues. Residues 246–256 (TDEDVSSEPET) are compositionally biased toward acidic residues. A compositionally biased stretch (low complexity) spans 280-292 (NSVSPPFSNSASS). An Association to cell membranes motif is present at residues 342–343 (CG). The disordered stretch occupies residues 412–492 (KKDAADSNAS…KNIPCTTKTH (81 aa)). The span at 418–437 (SNASLKRSSSYNGDRASNQM) shows a compositional bias: polar residues. Basic and acidic residues predominate over residues 471–482 (SEKRRDSSEDTT).

It belongs to the SOSEKI family. Homodimer. Forms long polymer filaments with other SOKs proteins polymers (e.g. SOK1, SOK2, SOK3 and SOK4) crucial for polar localization and biological activity. Binds to ANGUSTIFOLIA (AN). In terms of tissue distribution, expressed during embryogenesis and in roots.

Its subcellular location is the cell membrane. Its function is as follows. SOSEKI proteins (SOK1-5) locally interpret global polarity cues and can influence cell division orientation to coordinate cell polarization relative to body axes, probably by guiding ANGUSTIFOLIA (AN) polarized localization. This Arabidopsis thaliana (Mouse-ear cress) protein is Protein SOSEKI 3.